We begin with the raw amino-acid sequence, 341 residues long: UDP-N-acetylenolpyruvoylglucosamine reductase (341 aa).

Residues 13–185 (FGVEQSCLSM…TAVGLRLPKA (173 aa)) form the FAD-binding PCMH-type domain. Residue Arg-161 is part of the active site. Residue Ser-231 is the Proton donor of the active site. Glu-327 is a catalytic residue.

This sequence belongs to the MurB family. FAD serves as cofactor.

The protein resides in the cytoplasm. The catalysed reaction is UDP-N-acetyl-alpha-D-muramate + NADP(+) = UDP-N-acetyl-3-O-(1-carboxyvinyl)-alpha-D-glucosamine + NADPH + H(+). It participates in cell wall biogenesis; peptidoglycan biosynthesis. Functionally, cell wall formation. In Shewanella sp. (strain MR-4), this protein is UDP-N-acetylenolpyruvoylglucosamine reductase.